A 237-amino-acid chain; its full sequence is UDP-2,3-diacylglucosamine hydrolase (237 aa).

The Mn(2+) site is built by aspartate 9, histidine 11, aspartate 42, asparagine 80, and histidine 115. Position 80-81 (80-81) interacts with substrate; that stretch reads NR. Aspartate 123, serine 161, lysine 165, lysine 168, and histidine 196 together coordinate substrate. The Mn(2+) site is built by histidine 196 and histidine 198.

This sequence belongs to the LpxH family. Mn(2+) is required as a cofactor.

The protein resides in the cell inner membrane. It localises to the cytoplasm. The enzyme catalyses UDP-2-N,3-O-bis[(3R)-3-hydroxytetradecanoyl]-alpha-D-glucosamine + H2O = 2-N,3-O-bis[(3R)-3-hydroxytetradecanoyl]-alpha-D-glucosaminyl 1-phosphate + UMP + 2 H(+). Its pathway is glycolipid biosynthesis; lipid IV(A) biosynthesis; lipid IV(A) from (3R)-3-hydroxytetradecanoyl-[acyl-carrier-protein] and UDP-N-acetyl-alpha-D-glucosamine: step 4/6. Functionally, hydrolyzes the pyrophosphate bond of UDP-2,3-diacylglucosamine to yield 2,3-diacylglucosamine 1-phosphate (lipid X) and UMP by catalyzing the attack of water at the alpha-P atom. Involved in the biosynthesis of lipid A, a phosphorylated glycolipid that anchors the lipopolysaccharide to the outer membrane of the cell. The protein is UDP-2,3-diacylglucosamine hydrolase of Haemophilus influenzae (strain ATCC 51907 / DSM 11121 / KW20 / Rd).